The primary structure comprises 1363 residues: Insulin-like peptide receptor (1363 aa).

A signal peptide spans 1–29; it reads MRVVDKMAGLMWAALTLVIGLGLLVPSNG. Residues N51, N97, N137, N278, N483, N599, N617, N665, N666, N711, N732, N736, N743, N816, N885, and N898 are each glycosylated (N-linked (GlcNAc...) asparagine). 2 consecutive Fibronectin type-III domains span residues 473-586 and 590-680; these read SFSR…TDAD and HPQD…CPKS. 2 consecutive Fibronectin type-III domains span residues 712–804 and 813–912; these read ETRA…LART and IPGN…VEEE. Topologically, residues 721–928 are extracellular; that stretch reads ELPVTARPFY…QDPQQQVPVS (208 aa). Positions 739–759 are disordered; the sequence is LPSTNRTVPPTPTPNPNPQLE. A helical membrane pass occupies residues 929-949; the sequence is LMIGMGVGFSLLLILAVIFGI. At 950-1363 the chain is on the cytoplasmic side; sequence WYCTKKRFGD…NLRIPKSTLC (414 aa). Residues 994-1283 form the Protein kinase domain; sequence ITLIRELGQG…EIVEILSPEL (290 aa). Residues 1000-1008 and K1028 each bind ATP; that span reads LGQGSFGMV. The tract at residues 1091–1117 is disordered; it reads PEEDVGLSDSPASNEAKNSPFAENDND. The active-site Proton acceptor is the D1148. At Y1174 the chain carries Phosphotyrosine; by autocatalysis. The disordered stretch occupies residues 1316–1363; that stretch reads DTETEMYPSGSEFSSTPSPPSETPYSHMNGSHPQNGSMNLRIPKSTLC. The span at 1322 to 1331 shows a compositional bias: low complexity; that stretch reads YPSGSEFSST. The segment covering 1343 to 1353 has biased composition (polar residues); that stretch reads MNGSHPQNGSM.

It belongs to the protein kinase superfamily. Tyr protein kinase family. Insulin receptor subfamily. In terms of assembly, probable tetramer of 2 alpha and 2 beta chains linked by disulfide bonds. The alpha chains contribute to the formation of the ligand-binding domain, while the beta chains carry the kinase domain. Mn(2+) serves as cofactor.

It localises to the membrane. It carries out the reaction L-tyrosyl-[protein] + ATP = O-phospho-L-tyrosyl-[protein] + ADP + H(+). In terms of biological role, this receptor binds to the insulin related peptide and has a tyrosine-protein kinase activity. The sequence is that of Insulin-like peptide receptor from Branchiostoma lanceolatum (Common lancelet).